We begin with the raw amino-acid sequence, 252 residues long: Ribosome assembly factor mrt4 (252 aa).

This sequence belongs to the universal ribosomal protein uL10 family. As to quaternary structure, associates with the pre-60S ribosomal particle.

It is found in the nucleus. The protein resides in the nucleolus. Its subcellular location is the cytoplasm. In terms of biological role, component of the ribosome assembly machinery. Nuclear paralog of the ribosomal protein P0, it binds pre-60S subunits at an early stage of assembly in the nucleolus, and is replaced by P0 in cytoplasmic pre-60S subunits and mature 80S ribosomes. This chain is Ribosome assembly factor mrt4, found in Neurospora crassa (strain ATCC 24698 / 74-OR23-1A / CBS 708.71 / DSM 1257 / FGSC 987).